A 429-amino-acid polypeptide reads, in one-letter code: Gamma-glutamyl phosphate reductase (429 aa).

It belongs to the gamma-glutamyl phosphate reductase family.

The protein localises to the cytoplasm. It catalyses the reaction L-glutamate 5-semialdehyde + phosphate + NADP(+) = L-glutamyl 5-phosphate + NADPH + H(+). It functions in the pathway amino-acid biosynthesis; L-proline biosynthesis; L-glutamate 5-semialdehyde from L-glutamate: step 2/2. Its function is as follows. Catalyzes the NADPH-dependent reduction of L-glutamate 5-phosphate into L-glutamate 5-semialdehyde and phosphate. The product spontaneously undergoes cyclization to form 1-pyrroline-5-carboxylate. This Methylibium petroleiphilum (strain ATCC BAA-1232 / LMG 22953 / PM1) protein is Gamma-glutamyl phosphate reductase.